We begin with the raw amino-acid sequence, 469 residues long: 23S rRNA (uracil(1939)-C(5))-methyltransferase RlmD (469 aa).

Positions 11–69 constitute a TRAM domain; that stretch reads PKTSNQRLTVTVDKLDMNGVGVARWQNKPIFIAGVLPDEIVDVKVIEQKSKYARAKLIS. [4Fe-4S] cluster is bound by residues C82, C88, C91, and C178. Residues Q300, F329, N334, E350, D377, and D399 each contribute to the S-adenosyl-L-methionine site. The Nucleophile role is filled by C425.

Belongs to the class I-like SAM-binding methyltransferase superfamily. RNA M5U methyltransferase family. RlmD subfamily.

The enzyme catalyses uridine(1939) in 23S rRNA + S-adenosyl-L-methionine = 5-methyluridine(1939) in 23S rRNA + S-adenosyl-L-homocysteine + H(+). In terms of biological role, catalyzes the formation of 5-methyl-uridine at position 1939 (m5U1939) in 23S rRNA. This Colwellia psychrerythraea (strain 34H / ATCC BAA-681) (Vibrio psychroerythus) protein is 23S rRNA (uracil(1939)-C(5))-methyltransferase RlmD.